Consider the following 102-residue polypeptide: Gastrin/cholecystokinin-like peptide (102 aa).

A signal peptide spans 1-20; that stretch reads MDKKVCVSILLAMLAIAALC. The propeptide occupies 21–45; sequence RPMTELESARHGAQRKNSISDVSRR. A Sulfotyrosine modification is found at Y86. F92 is subject to Phenylalanine amide. The propeptide occupies 96 to 102; it reads SSEVTES.

This sequence belongs to the gastrin/cholecystokinin family. Expressed in antrum, duodenum, colon, pancreas, brain and testis. No expression found in kidney, lung, liver, skin or distal two-thirds of small intestine. In the brain, strongly expressed in the pituitary gland with moderate expression in the neural lobe, brain stem and hypothalamus.

The protein localises to the secreted. Its function is as follows. May control digestion processes. This Aquarana catesbeiana (American bullfrog) protein is Gastrin/cholecystokinin-like peptide (GAST).